Here is a 416-residue protein sequence, read N- to C-terminus: Glutamyl-tRNA reductase (416 aa).

Substrate-binding positions include 49–52 (TCNR), Ser105, 110–112 (EPQ), and Gln116. Cys50 (nucleophile) is an active-site residue. Position 185-190 (185-190 (GAGEMI)) interacts with NADP(+).

This sequence belongs to the glutamyl-tRNA reductase family. In terms of assembly, homodimer.

The catalysed reaction is (S)-4-amino-5-oxopentanoate + tRNA(Glu) + NADP(+) = L-glutamyl-tRNA(Glu) + NADPH + H(+). Its pathway is porphyrin-containing compound metabolism; protoporphyrin-IX biosynthesis; 5-aminolevulinate from L-glutamyl-tRNA(Glu): step 1/2. Its function is as follows. Catalyzes the NADPH-dependent reduction of glutamyl-tRNA(Glu) to glutamate 1-semialdehyde (GSA). The protein is Glutamyl-tRNA reductase of Nitrosomonas europaea (strain ATCC 19718 / CIP 103999 / KCTC 2705 / NBRC 14298).